Consider the following 269-residue polypeptide: Subtilisin BL (269 aa).

Gln2 is a binding site for Ca(2+). The Peptidase S8 domain occupies 5-268; that stretch reads PWGISRVQAP…SGLVNAEAAT (264 aa). The active-site Charge relay system is Asp32. Asp40 contacts Ca(2+). His62 functions as the Charge relay system in the catalytic mechanism. Ca(2+) is bound by residues Leu73, Asn75, Ile77, Val79, Ala163, Tyr165, and Ala168. Ser215 functions as the Charge relay system in the catalytic mechanism.

It belongs to the peptidase S8 family. Ca(2+) serves as cofactor.

It is found in the secreted. It carries out the reaction Hydrolysis of proteins with broad specificity for peptide bonds, and a preference for a large uncharged residue in P1. Hydrolyzes peptide amides.. Functionally, subtilisin is an extracellular alkaline serine protease, it catalyzes the hydrolysis of proteins and peptide amides. The polypeptide is Subtilisin BL (Lederbergia lenta (Bacillus lentus)).